The sequence spans 59 residues: Large ribosomal subunit protein bL32 (59 aa).

Positions 1–59 (MAVQQNRKSRSRRGMRRSHDALSSAALSIDPTTGEKHRRHHVTPDGFYRGKKVVEVSQD) are disordered. Basic residues predominate over residues 7–16 (RKSRSRRGMR).

Belongs to the bacterial ribosomal protein bL32 family.

The sequence is that of Large ribosomal subunit protein bL32 from Hahella chejuensis (strain KCTC 2396).